Reading from the N-terminus, the 361-residue chain is Chorismate synthase (361 aa).

2 residues coordinate NADP(+): Arg48 and Arg54. Residues 125–127 (RSS), 238–239 (NA), Gly278, 293–297 (KPTSS), and Arg319 each bind FMN.

This sequence belongs to the chorismate synthase family. Homotetramer. The cofactor is FMNH2.

It catalyses the reaction 5-O-(1-carboxyvinyl)-3-phosphoshikimate = chorismate + phosphate. Its pathway is metabolic intermediate biosynthesis; chorismate biosynthesis; chorismate from D-erythrose 4-phosphate and phosphoenolpyruvate: step 7/7. In terms of biological role, catalyzes the anti-1,4-elimination of the C-3 phosphate and the C-6 proR hydrogen from 5-enolpyruvylshikimate-3-phosphate (EPSP) to yield chorismate, which is the branch point compound that serves as the starting substrate for the three terminal pathways of aromatic amino acid biosynthesis. This reaction introduces a second double bond into the aromatic ring system. The polypeptide is Chorismate synthase (Methylobacillus flagellatus (strain ATCC 51484 / DSM 6875 / VKM B-1610 / KT)).